Here is a 421-residue protein sequence, read N- to C-terminus: Histidine--tRNA ligase (421 aa).

The protein belongs to the class-II aminoacyl-tRNA synthetase family. As to quaternary structure, homodimer.

It localises to the cytoplasm. The enzyme catalyses tRNA(His) + L-histidine + ATP = L-histidyl-tRNA(His) + AMP + diphosphate + H(+). The chain is Histidine--tRNA ligase from Coxiella burnetii (strain Dugway 5J108-111).